A 169-amino-acid polypeptide reads, in one-letter code: Protein yop1 (169 aa).

The Cytoplasmic portion of the chain corresponds to 1-35 (MASFQDRAQHTIAQLDKELSKYPVLNNLERQTSVP). The chain crosses the membrane as a helical span at residues 36–55 (KVYVILGLVGIYTFLVFFNI). A topological domain (lumenal) is located at residue Ala-56. A helical transmembrane segment spans residues 57-76 (GEFLVNFAGFLIPGYYSLNA). Residues 77–86 (LFTSGKADDT) lie on the Cytoplasmic side of the membrane. A helical transmembrane segment spans residues 87 to 103 (QWLTYWVVYALLTVVES). Over 104–105 (AI) the chain is Lumenal. A helical transmembrane segment spans residues 106-124 (NAAYWFPFYYIFKFVLILW). Residues 125 to 169 (MSLPQTNGAQVVFHSFLQPVLGRFFTSGSTSANLRAQADAASKSQ) are Cytoplasmic-facing.

Belongs to the DP1 family. Oligomer.

It is found in the endoplasmic reticulum membrane. It localises to the golgi apparatus membrane. Its function is as follows. Required to generate and maintain the structure of the tubular endoplasmic reticulum network and the vacuole. Induces high curvature in membranes and causes membrane tubule formation. Involved in membrane/vesicle trafficking. The chain is Protein yop1 (yop1) from Aspergillus fumigatus (strain ATCC MYA-4609 / CBS 101355 / FGSC A1100 / Af293) (Neosartorya fumigata).